The primary structure comprises 325 residues: Beta-ketoacyl-[acyl-carrier-protein] synthase III (325 aa).

Residues Cys-112 and His-250 contribute to the active site. Residues 251–255 (QANSR) form an ACP-binding region. Residue Asn-280 is part of the active site.

This sequence belongs to the thiolase-like superfamily. FabH family. As to quaternary structure, homodimer.

It is found in the cytoplasm. The catalysed reaction is malonyl-[ACP] + acetyl-CoA + H(+) = 3-oxobutanoyl-[ACP] + CO2 + CoA. It participates in lipid metabolism; fatty acid biosynthesis. Catalyzes the condensation reaction of fatty acid synthesis by the addition to an acyl acceptor of two carbons from malonyl-ACP. Catalyzes the first condensation reaction which initiates fatty acid synthesis and may therefore play a role in governing the total rate of fatty acid production. Possesses both acetoacetyl-ACP synthase and acetyl transacylase activities. Its substrate specificity determines the biosynthesis of branched-chain and/or straight-chain of fatty acids. This chain is Beta-ketoacyl-[acyl-carrier-protein] synthase III, found in Lactococcus lactis subsp. lactis (strain IL1403) (Streptococcus lactis).